The chain runs to 312 residues: Zinc-finger homeodomain protein 4 (312 aa).

Positions 20 to 74 (GGGGSHGHMIHHHDHHAANSAPPTHNNNNTTQPPPMPLHGNGHGNNYDHHHHQDP) are disordered. The segment covering 37-50 (ANSAPPTHNNNNTT) has biased composition (low complexity). A ZF-HD dimerization-type; degenerate zinc finger spans residues 90-139 (YKECLKNHAAAMGGNATDGCGEFMPSGEDGSIEALTCSACNCHRNFHRKE). The segment at residues 218–281 (KKRFRTKFTP…NNKIHFSKKN (64 aa)) is a DNA-binding region (homeobox).

Homo- and heterodimer with other ZFHD proteins. Interacts with ZHD1, ZHD2, ZHD5, ZHD7, ZHD8, ZHD10 and ZHD11. In terms of tissue distribution, mostly expressed in flowers and inflorescence.

It is found in the nucleus. In terms of biological role, putative transcription factor. Probably involved in the regulation of floral induction. In Arabidopsis thaliana (Mouse-ear cress), this protein is Zinc-finger homeodomain protein 4 (ZHD4).